We begin with the raw amino-acid sequence, 358 residues long: Probable isocitrate dehydrogenase [NAD] subunit alpha, mitochondrial (358 aa).

Substrate-binding residues include Arg108, Arg118, Arg139, and Asp226. 3 residues coordinate Mg(2+): Asp226, Asp250, and Asp254.

This sequence belongs to the isocitrate and isopropylmalate dehydrogenases family. Heterooligomer of subunits alpha, beta, and gamma in the apparent ratio of 2:1:1. Mg(2+) is required as a cofactor. The cofactor is Mn(2+).

Its subcellular location is the mitochondrion. The catalysed reaction is D-threo-isocitrate + NAD(+) = 2-oxoglutarate + CO2 + NADH. This chain is Probable isocitrate dehydrogenase [NAD] subunit alpha, mitochondrial (idha-1), found in Caenorhabditis elegans.